The sequence spans 294 residues: Thymidylate synthase (294 aa).

Residues arginine 31 and 156 to 157 contribute to the dUMP site; that span reads RR. Cysteine 176 acts as the Nucleophile in catalysis. Residues 196-199, asparagine 207, and 237-239 contribute to the dUMP site; these read RSAD and HIY. Residue aspartate 199 coordinates (6R)-5,10-methylene-5,6,7,8-tetrahydrofolate. Alanine 293 lines the (6R)-5,10-methylene-5,6,7,8-tetrahydrofolate pocket.

Belongs to the thymidylate synthase family. Homodimer.

The enzyme catalyses dUMP + (6R)-5,10-methylene-5,6,7,8-tetrahydrofolate = 7,8-dihydrofolate + dTMP. The protein operates within pyrimidine metabolism; dTTP biosynthesis. In Saimiri sciureus (Common squirrel monkey), this protein is Thymidylate synthase (70).